The primary structure comprises 417 residues: UDP-N-acetylglucosamine 1-carboxyvinyltransferase (417 aa).

22–23 (KN) lines the phosphoenolpyruvate pocket. Arg94 contacts UDP-N-acetyl-alpha-D-glucosamine. Catalysis depends on Cys118, which acts as the Proton donor. A 2-(S-cysteinyl)pyruvic acid O-phosphothioketal modification is found at Cys118. UDP-N-acetyl-alpha-D-glucosamine is bound by residues 123-127 (RPIDQ), Asp306, and Ile328.

This sequence belongs to the EPSP synthase family. MurA subfamily.

The protein resides in the cytoplasm. The enzyme catalyses phosphoenolpyruvate + UDP-N-acetyl-alpha-D-glucosamine = UDP-N-acetyl-3-O-(1-carboxyvinyl)-alpha-D-glucosamine + phosphate. It functions in the pathway cell wall biogenesis; peptidoglycan biosynthesis. Its function is as follows. Cell wall formation. Adds enolpyruvyl to UDP-N-acetylglucosamine. This chain is UDP-N-acetylglucosamine 1-carboxyvinyltransferase, found in Clostridium botulinum (strain ATCC 19397 / Type A).